The chain runs to 231 residues: Small ribosomal subunit protein uS3 (231 aa).

The region spanning 39-107 is the KH type-2 domain; that stretch reads IRELLHKELK…DVVINIVEIR (69 aa).

Belongs to the universal ribosomal protein uS3 family. Part of the 30S ribosomal subunit. Forms a tight complex with proteins S10 and S14.

Functionally, binds the lower part of the 30S subunit head. Binds mRNA in the 70S ribosome, positioning it for translation. This is Small ribosomal subunit protein uS3 from Nitrobacter hamburgensis (strain DSM 10229 / NCIMB 13809 / X14).